We begin with the raw amino-acid sequence, 303 residues long: Mycothiol acetyltransferase (303 aa).

2 consecutive N-acetyltransferase domains span residues 3 to 152 (VTVT…VSLP) and 155 to 303 (VRIR…MYRS). Residue aspartate 35 participates in 1D-myo-inositol 2-(L-cysteinylamino)-2-deoxy-alpha-D-glucopyranoside binding. An acetyl-CoA-binding site is contributed by 79 to 81 (LTV). 1D-myo-inositol 2-(L-cysteinylamino)-2-deoxy-alpha-D-glucopyranoside-binding residues include glutamate 182, lysine 224, and glutamate 237. Residues 241–243 (VGV) and 248–254 (QGSGLGR) contribute to the acetyl-CoA site. Residue tyrosine 275 coordinates 1D-myo-inositol 2-(L-cysteinylamino)-2-deoxy-alpha-D-glucopyranoside.

It belongs to the acetyltransferase family. MshD subfamily. In terms of assembly, monomer.

The enzyme catalyses 1D-myo-inositol 2-(L-cysteinylamino)-2-deoxy-alpha-D-glucopyranoside + acetyl-CoA = mycothiol + CoA + H(+). Functionally, catalyzes the transfer of acetyl from acetyl-CoA to desacetylmycothiol (Cys-GlcN-Ins) to form mycothiol. The chain is Mycothiol acetyltransferase from Kocuria rhizophila (strain ATCC 9341 / DSM 348 / NBRC 103217 / DC2201).